The following is a 337-amino-acid chain: Acetyl-coenzyme A synthetase (337 aa).

Residues 131-134 (RGGR), threonine 249, and asparagine 273 contribute to the CoA site. 325–327 (GEP) contacts ATP.

Belongs to the ATP-dependent AMP-binding enzyme family. It depends on Mg(2+) as a cofactor. Acetylated. Deacetylation by the SIR2-homolog deacetylase activates the enzyme.

It catalyses the reaction acetate + ATP + CoA = acetyl-CoA + AMP + diphosphate. Functionally, catalyzes the conversion of acetate into acetyl-CoA (AcCoA), an essential intermediate at the junction of anabolic and catabolic pathways. AcsA undergoes a two-step reaction. In the first half reaction, AcsA combines acetate with ATP to form acetyl-adenylate (AcAMP) intermediate. In the second half reaction, it can then transfer the acetyl group from AcAMP to the sulfhydryl group of CoA, forming the product AcCoA. This Nostoc linckia protein is Acetyl-coenzyme A synthetase (acsA).